We begin with the raw amino-acid sequence, 623 residues long: Leucine aminopeptidase 2 (623 aa).

The segment at 1 to 23 (MRRCTKNSRSTNPPRDPNTLSNY) is disordered. Polar residues predominate over residues 7-23 (NSRSTNPPRDPNTLSNY). A peptide contacts are provided by residues 145–147 (QCQ) and 277–282 (PYGGME). H306 is a Zn(2+) binding site. The active-site Proton acceptor is the E307. 2 residues coordinate Zn(2+): H310 and E329. Y394 (proton donor) is an active-site residue.

It belongs to the peptidase M1 family. The cofactor is Zn(2+).

It localises to the cytoplasm. It is found in the nucleus. It catalyses the reaction an epoxide + H2O = an ethanediol. Functionally, aminopeptidase that preferentially cleaves di- and tripeptides. Also has low epoxide hydrolase activity (in vitro). Can hydrolyze the epoxide leukotriene LTA(4) but it forms preferentially 5,6-dihydroxy-7,9,11,14-eicosatetraenoic acid rather than the cytokine leukotriene B(4) as the product compared to the homologous mammalian enzyme (in vitro). The polypeptide is Leucine aminopeptidase 2 (Ajellomyces capsulatus (strain NAm1 / WU24) (Darling's disease fungus)).